A 232-amino-acid chain; its full sequence is Enolase-phosphatase E1 (232 aa).

It belongs to the HAD-like hydrolase superfamily. MasA/MtnC family. In terms of assembly, monomer. Mg(2+) is required as a cofactor.

It carries out the reaction 5-methylsulfanyl-2,3-dioxopentyl phosphate + H2O = 1,2-dihydroxy-5-(methylsulfanyl)pent-1-en-3-one + phosphate. Its pathway is amino-acid biosynthesis; L-methionine biosynthesis via salvage pathway; L-methionine from S-methyl-5-thio-alpha-D-ribose 1-phosphate: step 3/6. It functions in the pathway amino-acid biosynthesis; L-methionine biosynthesis via salvage pathway; L-methionine from S-methyl-5-thio-alpha-D-ribose 1-phosphate: step 4/6. Bifunctional enzyme that catalyzes the enolization of 2,3-diketo-5-methylthiopentyl-1-phosphate (DK-MTP-1-P) into the intermediate 2-hydroxy-3-keto-5-methylthiopentenyl-1-phosphate (HK-MTPenyl-1-P), which is then dephosphorylated to form the acireductone 1,2-dihydroxy-3-keto-5-methylthiopentene (DHK-MTPene). This Xylella fastidiosa (strain 9a5c) protein is Enolase-phosphatase E1.